We begin with the raw amino-acid sequence, 562 residues long: Glutamine--tRNA ligase (562 aa).

The 'HIGH' region motif lies at 35-45 (PEPNGYLHIGH). ATP contacts are provided by residues 36–38 (EPN) and 42–48 (HIGHAKS). Aspartate 68 and tyrosine 213 together coordinate L-glutamine. ATP is bound by residues threonine 232 and 264 to 265 (RL). The 'KMSKS' region signature appears at 271–275 (ITSKR).

The protein belongs to the class-I aminoacyl-tRNA synthetase family. Monomer.

It is found in the cytoplasm. It catalyses the reaction tRNA(Gln) + L-glutamine + ATP = L-glutaminyl-tRNA(Gln) + AMP + diphosphate. In Neisseria meningitidis serogroup A / serotype 4A (strain DSM 15465 / Z2491), this protein is Glutamine--tRNA ligase.